The primary structure comprises 243 residues: Carboxy-S-adenosyl-L-methionine synthase (243 aa).

Residues Tyr-40, 65 to 67 (GCS), 90 to 91 (DN), 118 to 119 (DI), Asn-133, and Arg-200 contribute to the S-adenosyl-L-methionine site.

The protein belongs to the class I-like SAM-binding methyltransferase superfamily. Cx-SAM synthase family. Homodimer.

The catalysed reaction is prephenate + S-adenosyl-L-methionine = carboxy-S-adenosyl-L-methionine + 3-phenylpyruvate + H2O. Functionally, catalyzes the conversion of S-adenosyl-L-methionine (SAM) to carboxy-S-adenosyl-L-methionine (Cx-SAM). The protein is Carboxy-S-adenosyl-L-methionine synthase of Shewanella piezotolerans (strain WP3 / JCM 13877).